Consider the following 544-residue polypeptide: Inosine-5'-monophosphate dehydrogenase (544 aa).

CBS domains follow at residues 132-192 and 194-250; these read FITD…PIKS and MTTE…PYAS. NAD(+) is bound by residues 288-290 and 338-340; these read DSS and GMG. Glycine 340 and glycine 342 together coordinate K(+). Serine 343 is a binding site for IMP. Cysteine 345 contributes to the K(+) binding site. Residue cysteine 345 is the Thioimidate intermediate of the active site. IMP is bound by residues 378–380, 401–402, and 425–429; these read DGG, GG, and YRGMG. The active-site Proton acceptor is the arginine 458. Glutamine 470 contributes to the IMP binding site. K(+)-binding residues include glutamate 529, glycine 530, and glycine 531.

This sequence belongs to the IMPDH/GMPR family. As to quaternary structure, homotetramer. It depends on K(+) as a cofactor.

The protein resides in the cytoplasm. It catalyses the reaction IMP + NAD(+) + H2O = XMP + NADH + H(+). The protein operates within purine metabolism; XMP biosynthesis via de novo pathway; XMP from IMP: step 1/1. Mycophenolic acid (MPA) is a non-competitive inhibitor that prevents formation of the closed enzyme conformation by binding to the same site as the amobile flap. In contrast, mizoribine monophosphate (MZP) is a competitive inhibitor that induces the closed conformation. MPA is a potent inhibitor of mammalian IMPDHs but a poor inhibitor of the bacterial enzymes. MZP is a more potent inhibitor of bacterial IMPDH. Its function is as follows. Catalyzes the conversion of inosine 5'-phosphate (IMP) to xanthosine 5'-phosphate (XMP), the first committed and rate-limiting step in the de novo synthesis of guanine nucleotides, and therefore plays an important role in the regulation of cell growth. This is Inosine-5'-monophosphate dehydrogenase from Cryptococcus neoformans var. neoformans serotype D (strain JEC21 / ATCC MYA-565) (Filobasidiella neoformans).